We begin with the raw amino-acid sequence, 452 residues long: Phosphatidylserine synthase 2 (452 aa).

Topologically, residues Met-1–Arg-35 are cytoplasmic. Residues Ala-36 to Glu-56 traverse the membrane as a helical segment. Over Glu-57 to Gly-69 the chain is Lumenal. Residues Ile-70–Phe-90 traverse the membrane as a helical segment. Over Thr-91–Arg-99 the chain is Cytoplasmic. A helical membrane pass occupies residues Phe-100–Val-120. The Lumenal portion of the chain corresponds to His-121–Arg-286. The chain crosses the membrane as a helical span at residues Trp-287–Leu-307. Residue Lys-308 is a topological domain, cytoplasmic. Residues Phe-309–Asn-329 form a helical membrane-spanning segment. Over Val-330–Lys-349 the chain is Lumenal. The helical transmembrane segment at Lys-350–Val-370 threads the bilayer. At Lys-371–Thr-376 the chain is on the cytoplasmic side. A helical membrane pass occupies residues Ile-377 to Leu-397. The Lumenal portion of the chain corresponds to Val-398–Ser-452. The segment at Arg-419–Ser-452 is disordered. Over residues Ser-430–Met-444 the composition is skewed to polar residues.

This sequence belongs to the phosphatidyl serine synthase family.

The protein resides in the endoplasmic reticulum membrane. It catalyses the reaction a 1,2-diacyl-sn-glycero-3-phosphoethanolamine + L-serine = a 1,2-diacyl-sn-glycero-3-phospho-L-serine + ethanolamine. It carries out the reaction 1-hexadecanoyl-2-(9Z-octadecenoyl)-sn-glycero-3-phosphoethanolamine + L-serine = 1-hexadecanoyl-2-(9Z-octadecenoyl)-sn-glycero-3-phospho-L-serine + ethanolamine. The catalysed reaction is 1-hexadecanoyl-2-(4Z,7Z,10Z,13Z,16Z,19Z-docosahexaenoyl)-sn-glycero-3-phosphoethanolamine + L-serine = 1-hexadecanoyl-2-(4Z,7Z,10Z,13Z,16Z,19Z-docosahexaenoyl)-sn-glycero-3-phosphoserine + ethanolamine. The enzyme catalyses 1-octadecanoyl-2-(5Z,8Z,11Z,14Z)-eicosatetraenoyl-sn-glycero-3-phosphoethanolamine + L-serine = 1-octadecanoyl-2-(5Z,8Z,11Z,14Z)-eicosatetraenoyl-sn-glycero-3-phosphoserine + ethanolamine. It catalyses the reaction 1-octadecanoyl-2-(4Z,7Z,10Z,13Z,16Z,19Z-docosahexaenoyl)-sn-glycero-3-phosphoethanolamine + L-serine = 1-octadecanoyl-2-(4Z,7Z,10Z,13Z,16Z,19Z-docosahexaenoyl)-sn-glycero-3-phosphoserine + ethanolamine. It carries out the reaction 1-(1Z-octadecenyl)-2-(4Z,7Z,10Z,13Z,16Z,19Z-docosahexaenoyl)-sn-glycero-3-phosphoethanolamine + L-serine = 1-(1Z-octadecenyl)-2-(4Z,7Z,10Z,13Z,16Z,19Z-docosahexaenoyl)-sn-glycero-3-phospho-L-serine + ethanolamine. The catalysed reaction is 1-octadecanoyl-2-(9Z-octadecenoyl)-sn-glycero-3-phosphoethanolamine + L-serine = 1-octadecanoyl-2-(9Z-octadecenoyl)-sn-glycero-3-phospho-L-serine + ethanolamine. The enzyme catalyses 1-(1Z-octadecenyl)-2-(9Z-octadecenoyl)-sn-glycero-3-phosphoethanolamine + L-serine = 1-(1Z-octadecenyl)-2-(9Z-octadecenoyl)-sn-glycero-3-phospho-L-serine + ethanolamine. It catalyses the reaction 1-(1Z-octadecenyl)-2-(5Z,8Z,11Z,14Z- eicosatetraenoyl)-sn-glycero-3-phosphoethanolamine + L-serine = 1-(1Z-octadecenyl)-2-(5Z,8Z,11Z,14Z-eicosatetraenoyl)-sn-glycero-3-phospho-L-serine + ethanolamine. It participates in phospholipid metabolism; phosphatidylserine biosynthesis. Functionally, catalyzes a base-exchange reaction in which the polar head group of phosphatidylethanolamine (PE) or phosphatidylcholine (PC) is replaced by L-serine. Catalyzes the conversion of phosphatatidylethanolamine and does not act on phosphatidylcholine. Can utilize both phosphatidylethanolamine (PE) plasmalogen and diacyl PE as substrate and the latter is six times better utilized, indicating the importance of an ester linkage at the sn-1 position. Although it shows no sn-1 fatty acyl preference, exhibits significant preference towards docosahexaenoic acid (22:6n-3) compared with 18:1 or 20:4 at the sn-2 position. This Danio rerio (Zebrafish) protein is Phosphatidylserine synthase 2 (ptdss2).